The following is a 367-amino-acid chain: Protein SGT1 homolog (367 aa).

3 TPR repeats span residues 6–39, 40–73, and 75–107; these read ASDL…SPAT, AELY…DPSM, and KAYL…ASGD. A CS domain is found at 165–254; the sequence is KPKYRHDFYN…AEQITWTSLD (90 aa). Disordered stretches follow at residues 261–289 and 347–367; these read AVPQ…DWDK and VGSK…KWEY. Residues 277–367 form the SGS domain; sequence SYPSSKSKKD…DGMELKKWEY (91 aa).

This sequence belongs to the SGT1 family. As to quaternary structure, interacts (via CS domain) with RAR1 (via CHORD 2 domain). Interacts with RAD6. Expressed in roots, root tips, shoot apical meristem (SAM), young leaves, flag leaves and ears.

The protein localises to the cytoplasm. Its subcellular location is the nucleus. Involved in basal disease resistance to bacterial blight (X.oryzae). May act as positive regulator of basal defense. Probably required for SCF-mediated ubiquitination, by coupling HSP90 to SCF complex for ubiquitination of HSP90 client proteins. This chain is Protein SGT1 homolog, found in Oryza sativa subsp. japonica (Rice).